An 87-amino-acid polypeptide reads, in one-letter code: Large ribosomal subunit protein bL27 (87 aa).

Residues 1–21 (MAHKKAGGSSRNGRDSESKRL) form a disordered region.

The protein belongs to the bacterial ribosomal protein bL27 family.

This is Large ribosomal subunit protein bL27 from Paraburkholderia phytofirmans (strain DSM 17436 / LMG 22146 / PsJN) (Burkholderia phytofirmans).